Reading from the N-terminus, the 183-residue chain is Non-classical export protein 2 homolog (183 aa).

The Cytoplasmic segment spans residues 1–8; sequence MVGIRQYG. A helical transmembrane segment spans residues 9 to 29; it reads VFTWVFRTFQLAIDTIVLALA. At 30-44 the chain is on the extracellular side; that stretch reads SALVNQQTSGGSPGK. The helical transmembrane segment at 45 to 65 threads the bilayer; it reads INFSVAVGSFAILTFFLTAVG. Residues 66 to 75 are Cytoplasmic-facing; it reads RFLPTILGNP. The chain crosses the membrane as a helical span at residues 76–96; sequence WLIAFYDFVNWVFALTGGCCI. Residues 97–131 are Extracellular-facing; that stretch reads AVAIRVHACDNQKYLDRNHYTQGSMRRCQELKALC. The helical transmembrane segment at 132-152 threads the bilayer; it reads FFLWFMFGLYVASFIVQIFIA. Residues 153-183 are Cytoplasmic-facing; sequence KNDTPNYTFRGRGRGKGSGPAVAPRPVMSAV. The disordered stretch occupies residues 163 to 183; it reads GRGRGKGSGPAVAPRPVMSAV.

Belongs to the NCE102 family.

The protein localises to the cytoplasm. The protein resides in the golgi apparatus membrane. It localises to the cell membrane. In terms of biological role, involved in membrane organization and might act as a sensor of sphingolipids that regulates plasma membrane function. Involved in a novel pathway of export of proteins that lack a cleavable signal sequence. This chain is Non-classical export protein 2 homolog (fhn1), found in Schizosaccharomyces pombe (strain 972 / ATCC 24843) (Fission yeast).